The primary structure comprises 156 residues: Cyclic pyranopterin monophosphate synthase (156 aa).

Substrate is bound by residues 73 to 75 and 110 to 111; these read LCH and ME. Residue Asp-125 is part of the active site.

It belongs to the MoaC family. Homohexamer; trimer of dimers.

The catalysed reaction is (8S)-3',8-cyclo-7,8-dihydroguanosine 5'-triphosphate = cyclic pyranopterin phosphate + diphosphate. The protein operates within cofactor biosynthesis; molybdopterin biosynthesis. Its function is as follows. Catalyzes the conversion of (8S)-3',8-cyclo-7,8-dihydroguanosine 5'-triphosphate to cyclic pyranopterin monophosphate (cPMP). The polypeptide is Cyclic pyranopterin monophosphate synthase (Stutzerimonas stutzeri (strain A1501) (Pseudomonas stutzeri)).